The chain runs to 417 residues: Synaptic vesicle membrane protein VAT-1 homolog-like (417 aa).

Disordered regions lie at residues 1 to 33 (MAKE…GSHR) and 382 to 417 (PTPL…PFIQ). Serine 390 bears the Phosphoserine mark. Threonine 391 and threonine 393 each carry phosphothreonine. Serine 394 carries the phosphoserine modification. A compositionally biased stretch (acidic residues) spans 395 to 405 (EAGEEEEDHEG). Basic and acidic residues predominate over residues 406–417 (DSENKERMPFIQ).

This sequence belongs to the zinc-containing alcohol dehydrogenase family. Quinone oxidoreductase subfamily.

The sequence is that of Synaptic vesicle membrane protein VAT-1 homolog-like (Vat1l) from Mus musculus (Mouse).